We begin with the raw amino-acid sequence, 488 residues long: Protein nucleotidyltransferase YdiU (488 aa).

ATP contacts are provided by glycine 91, glycine 93, arginine 94, lysine 114, aspartate 126, glycine 127, arginine 177, and arginine 184. Aspartate 253 functions as the Proton acceptor in the catalytic mechanism. Mg(2+) contacts are provided by asparagine 254 and aspartate 263. Aspartate 263 contributes to the ATP binding site.

The protein belongs to the SELO family. It depends on Mg(2+) as a cofactor. Mn(2+) serves as cofactor.

The catalysed reaction is L-seryl-[protein] + ATP = 3-O-(5'-adenylyl)-L-seryl-[protein] + diphosphate. It catalyses the reaction L-threonyl-[protein] + ATP = 3-O-(5'-adenylyl)-L-threonyl-[protein] + diphosphate. The enzyme catalyses L-tyrosyl-[protein] + ATP = O-(5'-adenylyl)-L-tyrosyl-[protein] + diphosphate. It carries out the reaction L-histidyl-[protein] + UTP = N(tele)-(5'-uridylyl)-L-histidyl-[protein] + diphosphate. The catalysed reaction is L-seryl-[protein] + UTP = O-(5'-uridylyl)-L-seryl-[protein] + diphosphate. It catalyses the reaction L-tyrosyl-[protein] + UTP = O-(5'-uridylyl)-L-tyrosyl-[protein] + diphosphate. Nucleotidyltransferase involved in the post-translational modification of proteins. It can catalyze the addition of adenosine monophosphate (AMP) or uridine monophosphate (UMP) to a protein, resulting in modifications known as AMPylation and UMPylation. The chain is Protein nucleotidyltransferase YdiU from Bacillus thuringiensis subsp. konkukian (strain 97-27).